The chain runs to 875 residues: ATP-dependent helicase Lhr-Core (875 aa).

Residues Gln35, Lys58, Thr59, Asp173, Glu174, Ile355, Arg372, and His375 each coordinate ATP. Residues 39-230 form the Helicase ATP-binding domain; sequence IPLIKQNYNV…FLVGKDREYR (192 aa). Positions 173–176 match the DEIH box motif; the sequence is DEIH. The region spanning 247 to 419 is the Helicase C-terminal domain; sequence PVKDLVHSSE…SIHIPKNPLD (173 aa). The interval 420–506 is WH domain; the sequence is VLSQIIVSAS…IFYTNSGTIP (87 aa). A domain 4 region spans residues 507–875; the sequence is DEAMISVVTE…VNIELEYTSV (369 aa).

Belongs to the Lhr helicase family. Lhr-Core subfamily. As to quaternary structure, monomer and homodimer. The monomeric form has helicase, ATPase and strand annealing activities, while the dimeric form only has ATPAse and strand annealing activities. Interacts with DNA topoisomerase 3 (topA).

The enzyme catalyses Couples ATP hydrolysis with the unwinding of duplex DNA by translocating in the 3'-5' direction.. It carries out the reaction ATP + H2O = ADP + phosphate + H(+). Its activity is regulated as follows. DNA topoisomerase 3 (topA) inhibits helicase activity on Holliday junctions (HJ) but has no effect on ATPase activity. DNA helicase that translocates in a 3'-5' direction on single-stranded (ss)DNA, probably involved in DNA repair. Unwinds DNA in a 3'-5' direction, unwinding is ATP-dependent, acts preferentially on fork and 3'-tailed DNA; bubble and blunt-ended double-stranded (ds)DNA are not substrates. Has winding and unwinding activity, unwinds Holliday junction (HJ) DNA in the presence of ATP, the main product is forked DNA, single-stranded binding protein (SSB) does not stimulate activity. Anneals complementary oligonucleotides in an ATP-independent manner to form HJ and fork structures, thus can perform strand exchange. Preferentially binds HJ, forked and ssDNA, dsDNA is bound less well. LhrC-Core (Hel112) inhibits the exonuclease activity of the HerA-NurA complex on ss- and dsDNA, has no effect on ssDNA nicking by NurA; HerA-NurA are involved in DNA end-resection during DNA double-strand break repair. In Saccharolobus solfataricus (strain ATCC 35092 / DSM 1617 / JCM 11322 / P2) (Sulfolobus solfataricus), this protein is ATP-dependent helicase Lhr-Core.